We begin with the raw amino-acid sequence, 320 residues long: MVKATKAEKKIAYDTKLCQLIDEYTQILVVAADNVGSTQLQNIRKGLRGDSVVLMGKNTMMKRSVRIHSENTGNTAILNLLPLLQGNVGLIFTKGDLKEVSEEVAKYKVGAPARVGLVAPIDVVVQPGNTGLDPSQTSFFQVLNIPTKINKGTVEIITPVELIKQGDKVGSSEAALLAKLGIRPFSYGLVVQSVYDNGSVFSPEVLDLTEDQLVEKFASGISMVTSLALAVSYPTLAAAPHMFINAYKNALAIAVATEYTFPQAEKVKEYLKDPSKFAVASVAAVSADAGGGAPAAAKVEEKEESDEEDYGGDFGLFDEE.

The segment at 289–320 (AGGGAPAAAKVEEKEESDEEDYGGDFGLFDEE) is disordered. A compositionally biased stretch (acidic residues) spans 302–320 (KEESDEEDYGGDFGLFDEE). Position 305 is a phosphoserine (Ser-305). A Phosphotyrosine modification is found at Tyr-310.

The protein belongs to the universal ribosomal protein uL10 family. P0 forms a pentameric complex by interaction with dimers of P1 and P2.

Its function is as follows. Ribosomal protein P0 is the functional equivalent of E.coli protein L10. The protein is Large ribosomal subunit protein uL10y (RPP0B) of Arabidopsis thaliana (Mouse-ear cress).